A 239-amino-acid chain; its full sequence is tRNA (guanine-N(1)-)-methyltransferase (239 aa).

S-adenosyl-L-methionine-binding positions include Gly108 and Leu127–Leu132.

The protein belongs to the RNA methyltransferase TrmD family. As to quaternary structure, homodimer.

It localises to the cytoplasm. The enzyme catalyses guanosine(37) in tRNA + S-adenosyl-L-methionine = N(1)-methylguanosine(37) in tRNA + S-adenosyl-L-homocysteine + H(+). Functionally, specifically methylates guanosine-37 in various tRNAs. The chain is tRNA (guanine-N(1)-)-methyltransferase from Streptococcus thermophilus (strain CNRZ 1066).